Consider the following 234-residue polypeptide: Large ribosomal subunit protein uL1 (234 aa).

This sequence belongs to the universal ribosomal protein uL1 family. Part of the 50S ribosomal subunit.

In terms of biological role, binds directly to 23S rRNA. The L1 stalk is quite mobile in the ribosome, and is involved in E site tRNA release. Protein L1 is also a translational repressor protein, it controls the translation of the L11 operon by binding to its mRNA. The sequence is that of Large ribosomal subunit protein uL1 from Desulfatibacillum aliphaticivorans.